The sequence spans 400 residues: 3-phenylpropionate/cinnamic acid dioxygenase ferredoxin--NAD(+) reductase component (400 aa).

5–36 (TIIIVGGGQAAAMAAASLRQQGFTGELHLFSD) lines the FAD pocket. 146 to 174 (SVVIVGAGTIGLELAASATQRGCKATVIE) provides a ligand contact to NAD(+).

Belongs to the bacterial ring-hydroxylating dioxygenase ferredoxin reductase family. In terms of assembly, this dioxygenase system consists of four proteins: the two subunits of the hydroxylase component (HcaE and HcaF), a ferredoxin (HcaC) and a ferredoxin reductase (HcaD). It depends on FAD as a cofactor.

It carries out the reaction 2 reduced [2Fe-2S]-[ferredoxin] + NAD(+) + H(+) = 2 oxidized [2Fe-2S]-[ferredoxin] + NADH. Its pathway is aromatic compound metabolism; 3-phenylpropanoate degradation. In terms of biological role, part of the multicomponent 3-phenylpropionate dioxygenase, that converts 3-phenylpropionic acid (PP) and cinnamic acid (CI) into 3-phenylpropionate-dihydrodiol (PP-dihydrodiol) and cinnamic acid-dihydrodiol (CI-dihydrodiol), respectively. The sequence is that of 3-phenylpropionate/cinnamic acid dioxygenase ferredoxin--NAD(+) reductase component from Escherichia coli O7:K1 (strain IAI39 / ExPEC).